We begin with the raw amino-acid sequence, 705 residues long: GATOR2 complex protein WDR24 (705 aa).

WD repeat units lie at residues 1 to 28 (MDEN…RNKQ), 34 to 74 (EHKR…SVST), 77 to 117 (GQSE…RYER), 121 to 161 (AHNG…AKEI), 165 to 207 (QTIA…IPSA), and 211 to 254 (EHKD…IDRA). The C4-type zinc finger occupies 633–655 (NCSNCKRPMSNRGWICDRCRQCA). Zn(2+) is bound by residues C634, C637, C648, C651, C658, C661, C672, C675, H677, H680, H683, C694, C698, H700, and C702. Residues 656 to 705 (SMCAVCHHVVKGLFVWCQGCSHGGHLQHIMKWLETSSHCPAGCGHLCEYT) form an RING-type; atypical zinc finger.

This sequence belongs to the WD repeat WDR24 family. As to quaternary structure, component of the GATOR2 subcomplex, composed of MIOS, SEC13, SEH1L, WDR24 and WDR59. The GATOR2 complex interacts with CASTOR1 and CASTOR2; the interaction is negatively regulated by arginine. The GATOR2 complex interacts with SESN1, SESN2 and SESN3; the interaction is negatively regulated by amino acids.

It is found in the lysosome membrane. It carries out the reaction S-ubiquitinyl-[E2 ubiquitin-conjugating enzyme]-L-cysteine + [acceptor protein]-L-lysine = [E2 ubiquitin-conjugating enzyme]-L-cysteine + N(6)-ubiquitinyl-[acceptor protein]-L-lysine.. It participates in protein modification; protein ubiquitination. Its activity is regulated as follows. The GATOR2 complex is negatively regulated by the upstream amino acid sensors CASTOR1 and SESN2, which sequester the GATOR2 complex in absence of amino acids. In the presence of abundant amino acids, GATOR2 is released from CASTOR1 and SESN2 and activated. Catalytic component of the GATOR2 complex, a multiprotein complex that acts as an activator of the amino acid-sensing branch of the mTORC1 signaling pathway. The GATOR2 complex indirectly activates mTORC1 through the inhibition of the GATOR1 subcomplex. GATOR2 probably acts as an E3 ubiquitin-protein ligase toward GATOR1. In the presence of abundant amino acids, the GATOR2 complex mediates ubiquitination of the NPRL2 core component of the GATOR1 complex, leading to GATOR1 inactivation. In the absence of amino acids, GATOR2 is inhibited, activating the GATOR1 complex. In addition to its role in regulation of the mTORC1 complex, promotes the acidification of lysosomes and facilitates autophagic flux. Within the GATOR2 complex, WDR24 constitutes the catalytic subunit that mediates 'Lys-6'-linked ubiquitination of NPRL2. The sequence is that of GATOR2 complex protein WDR24 from Gallus gallus (Chicken).